Consider the following 500-residue polypeptide: Pyruvate kinase 1 (500 aa).

Ser-2 carries the post-translational modification N-acetylserine. A phosphoserine mark is found at Ser-9 and Ser-16. Thr-31 bears the Phosphothreonine mark. Arg-49 serves as a coordination point for substrate. Residues Asn-51 and Ser-53 each contribute to the K(+) site. Residue 51-54 participates in ATP binding; that stretch reads NFSH. Ser-70 bears the Phosphoserine mark. K(+) is bound by residues Asp-84 and Thr-85. Arg-91 lines the ATP pocket. Residues Lys-119, Lys-124, Lys-161, Lys-164, and Lys-166 each participate in a glycyl lysine isopeptide (Lys-Gly) (interchain with G-Cter in URM1) cross-link. Position 177 (Lys-177) interacts with ATP. Position 184 is a phosphothreonine (Thr-184). A Glycyl lysine isopeptide (Lys-Gly) (interchain with G-Cter in ubiquitin) cross-link involves residue Lys-204. Ser-213 carries the phosphoserine modification. Residue Lys-240 coordinates substrate. Residue Glu-242 participates in Mn(2+) binding. Lys-255 participates in a covalent cross-link: Glycyl lysine isopeptide (Lys-Gly) (interchain with G-Cter in ubiquitin). The substrate site is built by Gly-265 and Asp-266. Asp-266 contributes to the Mn(2+) binding site. Residue Lys-292 forms a Glycyl lysine isopeptide (Lys-Gly) (interchain with G-Cter in URM1) linkage. Substrate is bound at residue Thr-298. Ser-316 carries the phosphoserine modification. Lys-394 participates in a covalent cross-link: Glycyl lysine isopeptide (Lys-Gly) (interchain with G-Cter in URM1). Position 402-407 (402-407) interacts with beta-D-fructose 1,6-bisphosphate; it reads STSGTT. Cys-418 bears the Cysteine persulfide mark. Lys-446 participates in a covalent cross-link: Glycyl lysine isopeptide (Lys-Gly) (interchain with G-Cter in ubiquitin); alternate. A Glycyl lysine isopeptide (Lys-Gly) (interchain with G-Cter in URM1); alternate cross-link involves residue Lys-446. Ser-450 is subject to Phosphoserine. Trp-452 and Arg-459 together coordinate beta-D-fructose 1,6-bisphosphate. Thr-478 bears the Phosphothreonine mark. Residue Gly-484 coordinates beta-D-fructose 1,6-bisphosphate.

Belongs to the pyruvate kinase family. As to quaternary structure, homotetramer. The cofactor is Mg(2+). K(+) serves as cofactor. In terms of processing, conjugated to URM1, a ubiquitin-like protein, in response to oxidative stresses. The attachment of URM1 to lysine residues exclusively depends on the presence of a peroxidatic cysteine in the target protein, with low specificity for the particular residue, motif, or structural context at which urmylation can occur. The URM1-conjugation reaction is mechanistically and directly coupled to the process of cysteine persulfidation, transfering the sulfur atom of the URM1 thiocarboxyl group to redox-active cysteine residues in the target protein if it is exposed to oxidative conditions. Persulfidated on specific redox-active cysteine residues. Persulfidation (also called protein S-sulfhydration) may provide a molecular mechanism that enables cells to protect vulnerable cysteine residues from reactive oxygen species (ROS) under stress conditions.

The catalysed reaction is pyruvate + ATP = phosphoenolpyruvate + ADP + H(+). The protein operates within carbohydrate degradation; glycolysis; pyruvate from D-glyceraldehyde 3-phosphate: step 5/5. Its activity is regulated as follows. The activity is regulated by glucose levels. Activated by fructose-1,6-bisphosphate. This is Pyruvate kinase 1 (CDC19) from Saccharomyces cerevisiae (strain ATCC 204508 / S288c) (Baker's yeast).